The primary structure comprises 119 residues: Small ribosomal subunit protein uS10 (119 aa).

Ala2 carries the post-translational modification N-acetylalanine. Residue Lys4 forms a Glycyl lysine isopeptide (Lys-Gly) (interchain with G-Cter in ubiquitin) linkage. Residue Lys8 is modified to N6-succinyllysine; alternate. A Glycyl lysine isopeptide (Lys-Gly) (interchain with G-Cter in ubiquitin); alternate cross-link involves residue Lys8. Thr9 carries the phosphothreonine modification. N6-acetyllysine is present on residues Lys34 and Lys75. The residue at position 93 (Ser93) is a Phosphoserine.

This sequence belongs to the universal ribosomal protein uS10 family. Component of the 40S small ribosomal subunit. Post-translationally, polyubiquitinated by ZNF598 via 'Lys-63'-linked ubiquitin chains when a ribosome has stalled, initiating the ribosome quality control (RQC) pathway to degrade the potentially detrimental aberrant nascent polypeptide. Deubiquitinated by OTUD3 and USP21, antagonizing ZNF598 activity. Ufmylated by UFL1.

It localises to the cytoplasm. Component of the small ribosomal subunit. The ribosome is a large ribonucleoprotein complex responsible for the synthesis of proteins in the cell. This chain is Small ribosomal subunit protein uS10 (Rps20), found in Rattus norvegicus (Rat).